The following is a 494-amino-acid chain: Glutamate--tRNA ligase (494 aa).

A 'HIGH' region motif is present at residues P9–T19. The 'KMSKS' region signature appears at K250–R254. An ATP-binding site is contributed by K253.

The protein belongs to the class-I aminoacyl-tRNA synthetase family. Glutamate--tRNA ligase type 1 subfamily. As to quaternary structure, monomer.

The protein resides in the cytoplasm. It carries out the reaction tRNA(Glu) + L-glutamate + ATP = L-glutamyl-tRNA(Glu) + AMP + diphosphate. Functionally, catalyzes the attachment of glutamate to tRNA(Glu) in a two-step reaction: glutamate is first activated by ATP to form Glu-AMP and then transferred to the acceptor end of tRNA(Glu). This is Glutamate--tRNA ligase from Pseudoalteromonas translucida (strain TAC 125).